Here is a 451-residue protein sequence, read N- to C-terminus: Protein-tyrosine kinase 6 (451 aa).

One can recognise an SH3 domain in the interval His8–Thr72. 4 positions are modified to phosphotyrosine; by autocatalysis: Tyr13, Tyr61, Tyr66, and Tyr114. The 93-residue stretch at Trp78 to Cys170 folds into the SH2 domain. The linker stretch occupies residues Arg171–Glu190. Positions Phe191–Thr445 constitute a Protein kinase domain. Residues Leu197–Val205 and Lys219 contribute to the ATP site. Asp312 (proton acceptor) is an active-site residue. A phosphotyrosine; by autocatalysis mark is found at Tyr342 and Tyr351. A Phosphotyrosine modification is found at Tyr447.

The protein belongs to the protein kinase superfamily. Tyr protein kinase family. BRK/PTK6/SIK subfamily. In terms of assembly, interacts with GAP-A.p65. Interacts (via SH3 and SH2 domains) with KHDRBS1. Interacts (via SH3 and SH2 domains) with phosphorylated IRS4. Interacts with ADAM15. Interacts (via SH3 domain) with SFPQ. Interacts with EGFR and ERBB2. Interacts with STAP2. Interacts with PNX. Interacts with SFPQ. Interacts with PTK/ATK. Interacts with CTNNB1. In terms of processing, autophosphorylated. Autophosphorylation of Tyr-342 leads to an increase of kinase activity. Tyr-447 binds to the SH2 domain when phosphorylated and negatively regulates kinase activity. As to expression, epithelia-specific. Very high level in colon and high levels in small intestine and prostate, and low levels in some fetal tissues. Not expressed in breast or ovarian tissue but expressed in high percentage of breast and ovarian cancers. Also overexpressed in some metastatic melanomas, lymphomas, colon cancers, squamous cell carcinomas and prostate cancers. Also found in melanocytes. Not expressed in heart, brain, placenta, lung, liver, skeletal muscle, kidney and pancreas. Isoform 2 is present in prostate epithelial cell lines derived from normal prostate and prostate adenocarcinomas, as well as in a variety of cell lines.

The protein resides in the cytoplasm. The protein localises to the nucleus. Its subcellular location is the cell projection. It is found in the ruffle. It localises to the membrane. The enzyme catalyses L-tyrosyl-[protein] + ATP = O-phospho-L-tyrosyl-[protein] + ADP + H(+). Its activity is regulated as follows. Activated by EGF, NRG1 and IGF1. Inhibited by SOCS3 to phosphorylate STAT3. Stabilized in the inactive form by an association between the SH3 domain and the SH2-TK linker region. Interaction between Trp-184 within SH2-TK linker region and the catalytic domain appears essential for positive regulation of kinase activity. Functionally, non-receptor tyrosine-protein kinase implicated in the regulation of a variety of signaling pathways that control the differentiation and maintenance of normal epithelia, as well as tumor growth. Function seems to be context dependent and differ depending on cell type, as well as its intracellular localization. A number of potential nuclear and cytoplasmic substrates have been identified. These include the RNA-binding proteins: KHDRBS1/SAM68, KHDRBS2/SLM1, KHDRBS3/SLM2 and SFPQ/PSF; transcription factors: STAT3 and STAT5A/B and a variety of signaling molecules: ARHGAP35/p190RhoGAP, PXN/paxillin, BTK/ATK, STAP2/BKS. Phosphorylates the GTPase-activating protein ARAP1 following EGF stimulation which enhances EGFR signaling by delaying EGFR down-regulation. Also associates with a variety of proteins that are likely upstream of PTK6 in various signaling pathways, or for which PTK6 may play an adapter-like role. These proteins include ADAM15, EGFR, ERBB2, ERBB3 and IRS4. In normal or non-tumorigenic tissues, PTK6 promotes cellular differentiation and apoptosis. In tumors PTK6 contributes to cancer progression by sensitizing cells to mitogenic signals and enhancing proliferation, anchorage-independent survival and migration/invasion. Association with EGFR, ERBB2, ERBB3 may contribute to mammary tumor development and growth through enhancement of EGF-induced signaling via BTK/AKT and PI3 kinase. Contributes to migration and proliferation by contributing to EGF-mediated phosphorylation of ARHGAP35/p190RhoGAP, which promotes association with RASA1/p120RasGAP, inactivating RhoA while activating RAS. EGF stimulation resulted in phosphorylation of PNX/Paxillin by PTK6 and activation of RAC1 via CRK/CrKII, thereby promoting migration and invasion. PTK6 activates STAT3 and STAT5B to promote proliferation. Nuclear PTK6 may be important for regulating growth in normal epithelia, while cytoplasmic PTK6 might activate oncogenic signaling pathways. Its function is as follows. Inhibits PTK6 phosphorylation and PTK6 association with other tyrosine-phosphorylated proteins. In Homo sapiens (Human), this protein is Protein-tyrosine kinase 6 (PTK6).